Reading from the N-terminus, the 228-residue chain is MRELNELKHLAIIMDGNGRWAQERGKQRVRGHEKGAETIREITMFCSKSDISFLTLYAFSTENWKRPKTEVDFLMRLLSDYLKKEAEVYLKNNIRFKAIGDLSRFSSRLLDEIETLTQKSASCSGLTQVLALNYGSKDEIIRATQKMIEAGVEVSEENLSRFLDTAFAPDVDMLVRTGGDYRLSNYLLWQSSYAELFFTPTLWPDFTAGELAIQIEEFKRRKRRFGGI.

Residue aspartate 15 is part of the active site. Residue aspartate 15 coordinates Mg(2+). Substrate contacts are provided by residues 16-19 (GNGR), tryptophan 20, arginine 28, histidine 32, and 60-62 (STE). The Proton acceptor role is filled by asparagine 63. Substrate-binding positions include tryptophan 64, arginine 66, arginine 176, and 182–184 (RLS). Position 195 (glutamate 195) interacts with Mg(2+).

The protein belongs to the UPP synthase family. In terms of assembly, homodimer. Mg(2+) serves as cofactor.

In terms of biological role, catalyzes the condensation of isopentenyl diphosphate (IPP) with allylic pyrophosphates generating different type of terpenoids. This Wolinella succinogenes (strain ATCC 29543 / DSM 1740 / CCUG 13145 / JCM 31913 / LMG 7466 / NCTC 11488 / FDC 602W) (Vibrio succinogenes) protein is Isoprenyl transferase.